A 190-amino-acid chain; its full sequence is MEARVILIATTNKHKIEEINEVLQSCGYRVEPAAASKLEVQSNRLEDVAAYAAIQAYLALQRPVIVEDAGLFVEALGGFPGPYSSYVFKTIGIRGLLKLLEDVENRRAYFKSVIALAHSGGVEVFTGTVHGVIAEKPRGDRGFGYDPVFIPEGSSKTFAEMETQEKNKFSHRGKAARELCRWLRQYGPPR.

10–15 (TTNKHK) contacts substrate. 2 residues coordinate Mg(2+): glutamate 39 and aspartate 68. Residue aspartate 68 is the Proton acceptor of the active site. Substrate contacts are provided by residues alanine 69, 143-146 (FGYD), lysine 166, and 171-172 (HR).

This sequence belongs to the HAM1 NTPase family. In terms of assembly, homodimer. Mg(2+) serves as cofactor.

It catalyses the reaction XTP + H2O = XMP + diphosphate + H(+). It carries out the reaction dITP + H2O = dIMP + diphosphate + H(+). The enzyme catalyses ITP + H2O = IMP + diphosphate + H(+). Functionally, pyrophosphatase that catalyzes the hydrolysis of nucleoside triphosphates to their monophosphate derivatives, with a high preference for the non-canonical purine nucleotides XTP (xanthosine triphosphate), dITP (deoxyinosine triphosphate) and ITP. Seems to function as a house-cleaning enzyme that removes non-canonical purine nucleotides from the nucleotide pool, thus preventing their incorporation into DNA/RNA and avoiding chromosomal lesions. The sequence is that of dITP/XTP pyrophosphatase from Hyperthermus butylicus (strain DSM 5456 / JCM 9403 / PLM1-5).